Here is a 398-residue protein sequence, read N- to C-terminus: 1-deoxy-D-xylulose 5-phosphate reductoisomerase (398 aa).

Positions 10, 11, 12, 13, 36, 37, 38, and 124 each coordinate NADPH. Residue Lys125 coordinates 1-deoxy-D-xylulose 5-phosphate. Glu126 contributes to the NADPH binding site. Residue Asp150 coordinates Mn(2+). 1-deoxy-D-xylulose 5-phosphate contacts are provided by Ser151, Glu152, Ser186, and His209. Mn(2+) is bound at residue Glu152. Gly215 is an NADPH binding site. 4 residues coordinate 1-deoxy-D-xylulose 5-phosphate: Ser222, Asn227, Lys228, and Glu231. Glu231 serves as a coordination point for Mn(2+).

It belongs to the DXR family. As to quaternary structure, homodimer. It depends on Mg(2+) as a cofactor. Mn(2+) is required as a cofactor. The cofactor is Co(2+).

The enzyme catalyses 2-C-methyl-D-erythritol 4-phosphate + NADP(+) = 1-deoxy-D-xylulose 5-phosphate + NADPH + H(+). It functions in the pathway isoprenoid biosynthesis; isopentenyl diphosphate biosynthesis via DXP pathway; isopentenyl diphosphate from 1-deoxy-D-xylulose 5-phosphate: step 1/6. Inhibited by fosmidomycin. In terms of biological role, catalyzes the NADPH-dependent rearrangement and reduction of 1-deoxy-D-xylulose-5-phosphate (DXP) to 2-C-methyl-D-erythritol 4-phosphate (MEP). The chain is 1-deoxy-D-xylulose 5-phosphate reductoisomerase (dxr) from Escherichia coli (strain K12).